A 120-amino-acid chain; its full sequence is NAD(P)H-quinone oxidoreductase subunit 3, chloroplastic (120 aa).

3 helical membrane-spanning segments follow: residues 10–30 (FLVF…ASKL), 64–84 (MFAL…PWAV), and 89–109 (MGFI…VGLV).

Belongs to the complex I subunit 3 family. In terms of assembly, NDH is composed of at least 16 different subunits, 5 of which are encoded in the nucleus.

Its subcellular location is the plastid. It is found in the chloroplast thylakoid membrane. The catalysed reaction is a plastoquinone + NADH + (n+1) H(+)(in) = a plastoquinol + NAD(+) + n H(+)(out). The enzyme catalyses a plastoquinone + NADPH + (n+1) H(+)(in) = a plastoquinol + NADP(+) + n H(+)(out). NDH shuttles electrons from NAD(P)H:plastoquinone, via FMN and iron-sulfur (Fe-S) centers, to quinones in the photosynthetic chain and possibly in a chloroplast respiratory chain. The immediate electron acceptor for the enzyme in this species is believed to be plastoquinone. Couples the redox reaction to proton translocation, and thus conserves the redox energy in a proton gradient. In Chlorokybus atmophyticus (Soil alga), this protein is NAD(P)H-quinone oxidoreductase subunit 3, chloroplastic.